Consider the following 121-residue polypeptide: uncharacterized protein (121 aa).

3 consecutive transmembrane segments (helical) span residues Tyr26–Thr46, Ser57–Ile77, and Ser90–Val110.

It localises to the membrane. This is an uncharacterized protein from Saccharomyces cerevisiae (strain ATCC 204508 / S288c) (Baker's yeast).